The sequence spans 137 residues: Lysozyme (137 aa).

The first 20 residues, 1–20 (MSAVLVLALVLLSLTCVTDA), serve as a signal peptide directing secretion. An I-type lysozyme domain is found at 21-134 (ISDACLTCIC…WNAVKNQGCS (114 aa)). Cystine bridges form between cysteine 25-cysteine 102, cysteine 30-cysteine 37, cysteine 42-cysteine 51, cysteine 64-cysteine 84, cysteine 74-cysteine 80, and cysteine 98-cysteine 116. The Proton donor role is filled by glutamate 33. Residue aspartate 45 is the Nucleophile of the active site. 57 to 63 (KKSYWID) provides a ligand contact to substrate. Substrate-binding positions include tyrosine 88 and 109 to 111 (HNG).

This sequence belongs to the glycosyl hydrolase 22 family. Type-I lysozyme subfamily.

It localises to the secreted. The enzyme catalyses Hydrolysis of (1-&gt;4)-beta-linkages between N-acetylmuramic acid and N-acetyl-D-glucosamine residues in a peptidoglycan and between N-acetyl-D-glucosamine residues in chitodextrins.. In terms of biological role, has bacteriolytic activity. May play a role in digestion and in the host defense mechanisms against invading microbes. The sequence is that of Lysozyme (lysoz) from Ostrea edulis (Native oyster).